Consider the following 82-residue polypeptide: UPF0410 protein YeaQ (82 aa).

A run of 2 helical transmembrane segments spans residues 26–46 (GGGFFMTILLGIVGAVVGGWI) and 57–77 (GFNFGSFVVAVIGAIVVLFIY).

Belongs to the UPF0410 family.

The protein localises to the cell inner membrane. This chain is UPF0410 protein YeaQ (yeaQ), found in Escherichia coli O157:H7.